The following is a 527-amino-acid chain: Protein disulfide-isomerase A2 (527 aa).

A signal peptide spans 1 to 20 (MDKQLLPVLLLLLGVSGSWG). Residues 20 to 41 (GQGEEPGGPSEVLPEEPTGEEV) are disordered. A Thioredoxin 1 domain is found at 29-155 (SEVLPEEPTG…IAEWLRRRVG (127 aa)). Active-site nucleophile residues include Cys-74 and Cys-77. A disulfide bridge connects residues Cys-74 and Cys-77. Residues Asn-130 and Asn-287 are each glycosylated (N-linked (GlcNAc...) asparagine). A Thioredoxin 2 domain is found at 355–499 (VIAITAASVA…FSKFLDSGGH (145 aa)). Residues Cys-421 and Cys-424 each act as nucleophile in the active site. A disulfide bridge connects residues Cys-421 and Cys-424. Residues 495–527 (DSGGHLPKEEPKEPAASAPEAQANSTLGPKEEL) are disordered. An N-linked (GlcNAc...) asparagine glycan is attached at Asn-518. Residues 524 to 527 (KEEL) carry the Prevents secretion from ER motif.

Belongs to the protein disulfide isomerase family. In terms of assembly, part of a large chaperone multiprotein complex comprising DNAJB11, HSP90B1, HSPA5, HYOU, PDIA2, PDIA4, PDIA6, PPIB, SDF2L1, UGGT1 and very small amounts of ERP29, but not, or at very low levels, CALR nor CANX. Post-translationally, glycosylated. Highly expressed in pancreas.

It localises to the endoplasmic reticulum lumen. The enzyme catalyses Catalyzes the rearrangement of -S-S- bonds in proteins.. Functionally, acts as an intracellular estrogen-binding protein. May be involved in modulating cellular levels and biological functions of estrogens in the pancreas. May act as a chaperone that inhibits aggregation of misfolded proteins. The sequence is that of Protein disulfide-isomerase A2 from Mus musculus (Mouse).